The chain runs to 368 residues: tRNA-specific 2-thiouridylase MnmA (368 aa).

ATP-binding positions include 23 to 30 (ALSGGVDS) and Leu49. The active-site Nucleophile is the Cys110. Residues Cys110 and Cys209 are joined by a disulfide bond. ATP is bound at residue Gly135. Residues 159–161 (KDQ) are interaction with tRNA. Cys209 acts as the Cysteine persulfide intermediate in catalysis. The segment at 314 to 315 (RY) is interaction with tRNA.

It belongs to the MnmA/TRMU family.

Its subcellular location is the cytoplasm. It catalyses the reaction S-sulfanyl-L-cysteinyl-[protein] + uridine(34) in tRNA + AH2 + ATP = 2-thiouridine(34) in tRNA + L-cysteinyl-[protein] + A + AMP + diphosphate + H(+). Catalyzes the 2-thiolation of uridine at the wobble position (U34) of tRNA, leading to the formation of s(2)U34. This is tRNA-specific 2-thiouridylase MnmA from Synechococcus sp. (strain JA-2-3B'a(2-13)) (Cyanobacteria bacterium Yellowstone B-Prime).